A 101-amino-acid chain; its full sequence is Co-chaperonin GroES (101 aa).

It belongs to the GroES chaperonin family. In terms of assembly, heptamer of 7 subunits arranged in a ring. Interacts with the chaperonin GroEL.

It localises to the cytoplasm. Functionally, together with the chaperonin GroEL, plays an essential role in assisting protein folding. The GroEL-GroES system forms a nano-cage that allows encapsulation of the non-native substrate proteins and provides a physical environment optimized to promote and accelerate protein folding. GroES binds to the apical surface of the GroEL ring, thereby capping the opening of the GroEL channel. The polypeptide is Co-chaperonin GroES (Thermus thermophilus (strain ATCC BAA-163 / DSM 7039 / HB27)).